The chain runs to 390 residues: Lipoyl synthase, mitochondrial (390 aa).

A mitochondrion-targeting transit peptide spans 1-19 (MPTLLRILRPPRSPFTRCL). Positions 23–48 (ATPSSSGSSSRSKFTESLETGPGLDD) are disordered. Positions 98, 103, 109, 136, 140, 143, and 350 each coordinate [4Fe-4S] cluster. A Radical SAM core domain is found at 119–339 (AEGRSAATAT…KEVAENLGFL (221 aa)).

This sequence belongs to the radical SAM superfamily. Lipoyl synthase family. The cofactor is [4Fe-4S] cluster.

The protein resides in the mitochondrion. The catalysed reaction is [[Fe-S] cluster scaffold protein carrying a second [4Fe-4S](2+) cluster] + N(6)-octanoyl-L-lysyl-[protein] + 2 oxidized [2Fe-2S]-[ferredoxin] + 2 S-adenosyl-L-methionine + 4 H(+) = [[Fe-S] cluster scaffold protein] + N(6)-[(R)-dihydrolipoyl]-L-lysyl-[protein] + 4 Fe(3+) + 2 hydrogen sulfide + 2 5'-deoxyadenosine + 2 L-methionine + 2 reduced [2Fe-2S]-[ferredoxin]. Its pathway is protein modification; protein lipoylation via endogenous pathway; protein N(6)-(lipoyl)lysine from octanoyl-[acyl-carrier-protein]: step 2/2. Catalyzes the radical-mediated insertion of two sulfur atoms into the C-6 and C-8 positions of the octanoyl moiety bound to the lipoyl domains of lipoate-dependent enzymes, thereby converting the octanoylated domains into lipoylated derivatives. This is Lipoyl synthase, mitochondrial from Laccaria bicolor (strain S238N-H82 / ATCC MYA-4686) (Bicoloured deceiver).